The sequence spans 324 residues: Biotin synthase (324 aa).

Positions 43 to 273 (FCGNYFNFCS…HVFLRLAGGR (231 aa)) constitute a Radical SAM core domain. Cys-61, Cys-65, and Cys-68 together coordinate [4Fe-4S] cluster. 4 residues coordinate [2Fe-2S] cluster: Ser-105, Cys-138, Cys-198, and Arg-268.

This sequence belongs to the radical SAM superfamily. Biotin synthase family. In terms of assembly, homodimer. It depends on [4Fe-4S] cluster as a cofactor. The cofactor is [2Fe-2S] cluster.

The enzyme catalyses (4R,5S)-dethiobiotin + (sulfur carrier)-SH + 2 reduced [2Fe-2S]-[ferredoxin] + 2 S-adenosyl-L-methionine = (sulfur carrier)-H + biotin + 2 5'-deoxyadenosine + 2 L-methionine + 2 oxidized [2Fe-2S]-[ferredoxin]. It functions in the pathway cofactor biosynthesis; biotin biosynthesis; biotin from 7,8-diaminononanoate: step 2/2. Catalyzes the conversion of dethiobiotin (DTB) to biotin by the insertion of a sulfur atom into dethiobiotin via a radical-based mechanism. In Campylobacter hominis (strain ATCC BAA-381 / DSM 21671 / CCUG 45161 / LMG 19568 / NCTC 13146 / CH001A), this protein is Biotin synthase.